Here is a 122-residue protein sequence, read N- to C-terminus: Large ribosomal subunit protein uL14c (122 aa).

This sequence belongs to the universal ribosomal protein uL14 family. Part of the 50S ribosomal subunit.

It is found in the plastid. The protein localises to the chloroplast. Its function is as follows. Binds to 23S rRNA. This chain is Large ribosomal subunit protein uL14c, found in Carica papaya (Papaya).